Here is a 421-residue protein sequence, read N- to C-terminus: ATP-dependent RNA helicase RhlB (421 aa).

A Q motif motif is present at residues 9-37 (QKFSDFALHPKVVEALEKKGFHNCTPIQA). Residues 40–219 (LPLTLAGRDV…FEQMNNAEYI (180 aa)) form the Helicase ATP-binding domain. 53-60 (AQTGTGKT) is an ATP binding site. Positions 165 to 168 (DEAD) match the DEAD box motif. Positions 245–390 (RLLQTLIEEE…VSKYNPDALM (146 aa)) constitute a Helicase C-terminal domain. The disordered stretch occupies residues 392–421 (DLPKPLRLTRPRTGNGPRRTGAPRNRRRSG). Positions 402–414 (PRTGNGPRRTGAP) are enriched in low complexity.

The protein belongs to the DEAD box helicase family. RhlB subfamily. In terms of assembly, component of the RNA degradosome, which is a multiprotein complex involved in RNA processing and mRNA degradation.

It localises to the cytoplasm. The enzyme catalyses ATP + H2O = ADP + phosphate + H(+). DEAD-box RNA helicase involved in RNA degradation. Has RNA-dependent ATPase activity and unwinds double-stranded RNA. This chain is ATP-dependent RNA helicase RhlB, found in Escherichia coli O139:H28 (strain E24377A / ETEC).